The following is a 497-amino-acid chain: Serine hydroxymethyltransferase (497 aa).

Residues Leu-176 and 180–182 (GHL) contribute to the (6S)-5,6,7,8-tetrahydrofolate site. Lys-289 is modified (N6-(pyridoxal phosphate)lysine).

The protein belongs to the SHMT family. As to quaternary structure, homodimer. It depends on pyridoxal 5'-phosphate as a cofactor.

It localises to the cytoplasm. It catalyses the reaction (6R)-5,10-methylene-5,6,7,8-tetrahydrofolate + glycine + H2O = (6S)-5,6,7,8-tetrahydrofolate + L-serine. Its pathway is one-carbon metabolism; tetrahydrofolate interconversion. It participates in amino-acid biosynthesis; glycine biosynthesis; glycine from L-serine: step 1/1. Functionally, catalyzes the reversible interconversion of serine and glycine with tetrahydrofolate (THF) serving as the one-carbon carrier. This reaction serves as the major source of one-carbon groups required for the biosynthesis of purines, thymidylate, methionine, and other important biomolecules. Also exhibits THF-independent aldolase activity toward beta-hydroxyamino acids, producing glycine and aldehydes, via a retro-aldol mechanism. This is Serine hydroxymethyltransferase from Chlamydia felis (strain Fe/C-56) (Chlamydophila felis).